The following is a 79-amino-acid chain: uncharacterized protein (79 aa).

It belongs to the asfivirus D79L family.

This is an uncharacterized protein from African swine fever virus (strain Badajoz 1971 Vero-adapted) (Ba71V).